The primary structure comprises 293 residues: SAGA-associated factor 29 (293 aa).

The stretch at 12–88 (ELLAELQRLL…KALDKIAEIK (77 aa)) forms a coiled coil. The region spanning 152 to 293 (GDYVAKPGDK…VVACKETKKK (142 aa)) is the SGF29 C-terminal domain. Histone H3K4me3 N-terminus binding stretches follow at residues 194–196 (DID) and 240–243 (QTTC). The tract at residues 264–266 (FED) is histone H3K4me3 binding.

It belongs to the SGF29 family. Interacts with dimethylated and trimethylated 'Lys-4' of histone H3 (H3K4me2 and H3K4me3), with a preference for the trimethylated form (H3K4me3). Component of some SAGA-type complexes. Component of the ADA2A-containing complex (ATAC).

It is found in the nucleus. Chromatin reader component of some histone acetyltransferase (HAT) SAGA-type complexes like the TFTC-HAT, ATAC or STAGA complexes. SGF29 specifically recognizes and binds methylated 'Lys-4' of histone H3 (H3K4me), with a preference for trimethylated form (H3K4me3). In the SAGA-type complexes, SGF29 is required to recruit complexes to H3K4me. Also binds non-histone proteins that are methylated on Lys residues. This is SAGA-associated factor 29 from Gallus gallus (Chicken).